The following is a 277-amino-acid chain: ATP synthase subunit a (277 aa).

5 helical membrane-spanning segments follow: residues 40 to 60 (AWHV…LIIF), 98 to 118 (SALI…MNLM), 154 to 174 (DLNL…FYSI), 219 to 239 (LFGN…IGYF), and 245 to 265 (FMWA…FMML).

This sequence belongs to the ATPase A chain family. As to quaternary structure, F-type ATPases have 2 components, CF(1) - the catalytic core - and CF(0) - the membrane proton channel. CF(1) has five subunits: alpha(3), beta(3), gamma(1), delta(1), epsilon(1). CF(0) has three main subunits: a(1), b(2) and c(9-12). The alpha and beta chains form an alternating ring which encloses part of the gamma chain. CF(1) is attached to CF(0) by a central stalk formed by the gamma and epsilon chains, while a peripheral stalk is formed by the delta and b chains.

Its subcellular location is the cell inner membrane. Functionally, key component of the proton channel; it plays a direct role in the translocation of protons across the membrane. The polypeptide is ATP synthase subunit a (Alteromonas mediterranea (strain DSM 17117 / CIP 110805 / LMG 28347 / Deep ecotype)).